The chain runs to 309 residues: Porphobilinogen deaminase (309 aa).

Cys-241 bears the S-(dipyrrolylmethanemethyl)cysteine mark.

The protein belongs to the HMBS family. Monomer. Dipyrromethane serves as cofactor.

The catalysed reaction is 4 porphobilinogen + H2O = hydroxymethylbilane + 4 NH4(+). The protein operates within porphyrin-containing compound metabolism; protoporphyrin-IX biosynthesis; coproporphyrinogen-III from 5-aminolevulinate: step 2/4. Its function is as follows. Tetrapolymerization of the monopyrrole PBG into the hydroxymethylbilane pre-uroporphyrinogen in several discrete steps. In Bacillus mycoides (strain KBAB4) (Bacillus weihenstephanensis), this protein is Porphobilinogen deaminase.